Reading from the N-terminus, the 210-residue chain is UPF0502 protein Sama_1967 (210 aa).

It belongs to the UPF0502 family.

The protein is UPF0502 protein Sama_1967 of Shewanella amazonensis (strain ATCC BAA-1098 / SB2B).